The chain runs to 171 residues: MVVYDLLVSLSKESIDVLRFVEANLAAFNQQYIFFNIQRKNSITTPLLITPQQEKISQIVEFLMDEYNKNNRRPSGPPREQPMHPLLPYQQSPDEQPMMPYQQPPGNDDQPYEQIYHKKHASQQVNTELSDYYQHILALGDEDKGMDSTLKLPERTKRDSDDEDGMFSIKN.

Disordered regions lie at residues 68-124 (NKNN…ASQQ) and 140-171 (GDED…SIKN). A compositionally biased stretch (basic and acidic residues) spans 141-160 (DEDKGMDSTLKLPERTKRDS).

Belongs to the asfivirus H171R family.

The protein resides in the virion. This is an uncharacterized protein from Ornithodoros (relapsing fever ticks).